The following is a 608-amino-acid chain: 1-deoxy-D-xylulose-5-phosphate synthase (608 aa).

Thiamine diphosphate contacts are provided by residues H66 and 107 to 109 (GHA). D138 contributes to the Mg(2+) binding site. Residues 139 to 140 (GA), N167, F277, and E350 each bind thiamine diphosphate. Residue N167 coordinates Mg(2+).

This sequence belongs to the transketolase family. DXPS subfamily. In terms of assembly, homodimer. Requires Mg(2+) as cofactor. Thiamine diphosphate serves as cofactor.

It carries out the reaction D-glyceraldehyde 3-phosphate + pyruvate + H(+) = 1-deoxy-D-xylulose 5-phosphate + CO2. It functions in the pathway metabolic intermediate biosynthesis; 1-deoxy-D-xylulose 5-phosphate biosynthesis; 1-deoxy-D-xylulose 5-phosphate from D-glyceraldehyde 3-phosphate and pyruvate: step 1/1. Its function is as follows. Catalyzes the acyloin condensation reaction between C atoms 2 and 3 of pyruvate and glyceraldehyde 3-phosphate to yield 1-deoxy-D-xylulose-5-phosphate (DXP). This chain is 1-deoxy-D-xylulose-5-phosphate synthase, found in Thermotoga petrophila (strain ATCC BAA-488 / DSM 13995 / JCM 10881 / RKU-1).